A 361-amino-acid polypeptide reads, in one-letter code: UPF0283 membrane protein mlr0776 (361 aa).

The tract at residues Met1 to Lys33 is disordered. The segment covering Pro23–Arg32 has biased composition (basic and acidic residues). Helical transmembrane passes span Leu73–Trp93 and Leu108–Ile128.

Belongs to the UPF0283 family.

It localises to the cell inner membrane. This Mesorhizobium japonicum (strain LMG 29417 / CECT 9101 / MAFF 303099) (Mesorhizobium loti (strain MAFF 303099)) protein is UPF0283 membrane protein mlr0776.